An 88-amino-acid polypeptide reads, in one-letter code: Exodeoxyribonuclease 7 small subunit (88 aa).

This sequence belongs to the XseB family. Heterooligomer composed of large and small subunits.

Its subcellular location is the cytoplasm. It carries out the reaction Exonucleolytic cleavage in either 5'- to 3'- or 3'- to 5'-direction to yield nucleoside 5'-phosphates.. Functionally, bidirectionally degrades single-stranded DNA into large acid-insoluble oligonucleotides, which are then degraded further into small acid-soluble oligonucleotides. This Bordetella petrii (strain ATCC BAA-461 / DSM 12804 / CCUG 43448) protein is Exodeoxyribonuclease 7 small subunit.